The chain runs to 357 residues: Glutamine synthetase cytosolic isozyme 1-2 (357 aa).

The GS beta-grasp domain maps to 19-99 (IIAEYIWVGG…VMCDCYTPQG (81 aa)). Residues 106-357 (KRHSAAKIFS…AETTLLWKQN (252 aa)) form the GS catalytic domain.

The protein belongs to the glutamine synthetase family. Homooctamer. In terms of tissue distribution, expressed in roots and at lower levels in leaf blades and spikelets (rice flower).

The protein localises to the cytoplasm. It carries out the reaction L-glutamate + NH4(+) + ATP = L-glutamine + ADP + phosphate + H(+). In terms of biological role, high-affinity glutamine synthetase involved in ammonium assimilation. Plays an important role in the primary assimilation of ammonium taken up by roots. Plays a role in maintaining nitrogen metabolic balance during ammonium assimilation, thus controlling plant growth and development. Reassimilates ammonium generated during lignification within developing tillers, which is probably required for the outgrowth of axillary buds. Required for nitrogen-dependent biosynthesis of cytokinin. Active cytokinin in axillary bud meristem is required for axillary bud outgrowth and necessary for tillering. The sequence is that of Glutamine synthetase cytosolic isozyme 1-2 from Oryza sativa subsp. japonica (Rice).